Consider the following 152-residue polypeptide: Lipoprotein signal peptidase (152 aa).

2 helical membrane passes run 55-75 (NKMWFFYIITVIFVAFIVFYM) and 85-105 (LGISLGLILGGAIGNFIDRVF). Catalysis depends on residues D111 and D129. Residues 124-144 (VFNIADSALCIGVVLIIIQTV) form a helical membrane-spanning segment.

Belongs to the peptidase A8 family.

It localises to the cell membrane. It carries out the reaction Release of signal peptides from bacterial membrane prolipoproteins. Hydrolyzes -Xaa-Yaa-Zaa-|-(S,diacylglyceryl)Cys-, in which Xaa is hydrophobic (preferably Leu), and Yaa (Ala or Ser) and Zaa (Gly or Ala) have small, neutral side chains.. It functions in the pathway protein modification; lipoprotein biosynthesis (signal peptide cleavage). Functionally, this protein specifically catalyzes the removal of signal peptides from prolipoproteins. This chain is Lipoprotein signal peptidase, found in Bacillus mycoides (strain KBAB4) (Bacillus weihenstephanensis).